A 388-amino-acid chain; its full sequence is MALQLLPSTLSVPKKGSSMGAAAVKDTAAFLGVSSKAKKASLAVRTQVATAPSSVTTSPGSATAKPSGKKTLRQGVVVITGASSGLGLAAAKALAETGKWHVVMACRDFLKASKAAKAAGMADGSYTVMHLDLASLDSVRQFVDAFRRAEMPLDVLVCNAAIYRPTARTPTFTADGHEMSVGVNHLGHFLLARLLMEDLQKSDYPSRRMVIVGSITGNSNTLAGNVPPKASLGDLRGLAGGLSGASGSAMIDGDESFDGAKAYKDSKVCNMLTMQEFHRRYHEETGITFSSLYPGCIATTGLFREHIPLFRTLFPPFQKFVTKGFVSEAESGKRLAQVVAEPSLTKSGVYWSWNKDSASFENQLSQEASDPEKARKVWELSEKLVGLA.

Residues 1 to 74 (MALQLLPSTL…KPSGKKTLRQ (74 aa)) constitute a chloroplast transit peptide.

Belongs to the short-chain dehydrogenases/reductases (SDR) family. POR subfamily.

The protein resides in the plastid. Its subcellular location is the chloroplast. It carries out the reaction chlorophyllide a + NADP(+) = protochlorophyllide a + NADPH + H(+). It participates in porphyrin-containing compound metabolism; chlorophyll biosynthesis. Its function is as follows. Phototransformation of protochlorophyllide (Pchlide) to chlorophyllide (Chlide). The protein is Protochlorophyllide reductase A, chloroplastic (PORA) of Triticum aestivum (Wheat).